A 127-amino-acid polypeptide reads, in one-letter code: Glycine cleavage system H protein (127 aa).

A Lipoyl-binding domain is found at 24–105 (TALVGITDFA…YNDGWLVKMK (82 aa)). N6-lipoyllysine is present on lysine 65.

The protein belongs to the GcvH family. In terms of assembly, the glycine cleavage system is composed of four proteins: P, T, L and H. (R)-lipoate serves as cofactor.

Functionally, the glycine cleavage system catalyzes the degradation of glycine. The H protein shuttles the methylamine group of glycine from the P protein to the T protein. This is Glycine cleavage system H protein from Pelodictyon phaeoclathratiforme (strain DSM 5477 / BU-1).